The primary structure comprises 136 residues: Large ribosomal subunit protein uL16c (136 aa).

The segment at 1-20 (MLSPKRTKFRKQHRGRMKGK) is disordered.

The protein belongs to the universal ribosomal protein uL16 family. As to quaternary structure, part of the 50S ribosomal subunit.

Its subcellular location is the plastid. The protein resides in the chloroplast. This Brachypodium distachyon (Purple false brome) protein is Large ribosomal subunit protein uL16c.